The chain runs to 185 residues: uncharacterized protein (185 aa).

Positions 9–169 (VILELAKESD…NGREDDKPLL (161 aa)) constitute an N-acetyltransferase domain.

This is an uncharacterized protein from Bacillus subtilis (strain 168).